A 622-amino-acid chain; its full sequence is Pesticidal crystal protein Cry2Ac (622 aa).

Belongs to the delta endotoxin family.

In terms of biological role, promotes colloidosmotic lysis by binding to the midgut epithelial cells of lepidopteran larvae. Has low activity on dipteran larvae. The protein is Pesticidal crystal protein Cry2Ac (cry2Ac) of Bacillus thuringiensis.